The primary structure comprises 262 residues: uncharacterized protein (262 aa).

This sequence belongs to the glycosyltransferase 2 family.

This is an uncharacterized protein from Mycobacterium tuberculosis (strain CDC 1551 / Oshkosh).